We begin with the raw amino-acid sequence, 318 residues long: Methionyl-tRNA formyltransferase (318 aa).

117–120 lines the (6S)-5,6,7,8-tetrahydrofolate pocket; sequence SLLP.

Belongs to the Fmt family.

The enzyme catalyses L-methionyl-tRNA(fMet) + (6R)-10-formyltetrahydrofolate = N-formyl-L-methionyl-tRNA(fMet) + (6S)-5,6,7,8-tetrahydrofolate + H(+). Attaches a formyl group to the free amino group of methionyl-tRNA(fMet). The formyl group appears to play a dual role in the initiator identity of N-formylmethionyl-tRNA by promoting its recognition by IF2 and preventing the misappropriation of this tRNA by the elongation apparatus. This chain is Methionyl-tRNA formyltransferase, found in Malacoplasma penetrans (strain HF-2) (Mycoplasma penetrans).